A 1296-amino-acid polypeptide reads, in one-letter code: DNA-directed RNA polymerase subunit beta' (1296 aa).

The Zn(2+) site is built by cysteine 60, cysteine 62, cysteine 75, and cysteine 78. Residues 185–202 are compositionally biased toward basic and acidic residues; the sequence is EEEGGKAAEKRKLRDSAD. The interval 185–204 is disordered; the sequence is EEEGGKAAEKRKLRDSADRQ. Residues aspartate 535, aspartate 537, and aspartate 539 each contribute to the Mg(2+) site. 4 residues coordinate Zn(2+): cysteine 877, cysteine 954, cysteine 961, and cysteine 964.

The protein belongs to the RNA polymerase beta' chain family. The RNAP catalytic core consists of 2 alpha, 1 beta, 1 beta' and 1 omega subunit. When a sigma factor is associated with the core the holoenzyme is formed, which can initiate transcription. Mg(2+) is required as a cofactor. It depends on Zn(2+) as a cofactor.

It carries out the reaction RNA(n) + a ribonucleoside 5'-triphosphate = RNA(n+1) + diphosphate. Functionally, DNA-dependent RNA polymerase catalyzes the transcription of DNA into RNA using the four ribonucleoside triphosphates as substrates. This Kocuria rhizophila (strain ATCC 9341 / DSM 348 / NBRC 103217 / DC2201) protein is DNA-directed RNA polymerase subunit beta'.